Consider the following 165-residue polypeptide: UPF0303 protein BTH_I2506 (165 aa).

Belongs to the UPF0303 family.

The sequence is that of UPF0303 protein BTH_I2506 from Burkholderia thailandensis (strain ATCC 700388 / DSM 13276 / CCUG 48851 / CIP 106301 / E264).